We begin with the raw amino-acid sequence, 693 residues long: Polyribonucleotide nucleotidyltransferase (693 aa).

Mg(2+) is bound by residues aspartate 489 and aspartate 495. A KH domain is found at 556–615 (PQIHVMNINPAKIKDVVGRGGATVKGIVEKTGAQIDTSDSGEVKVFAKDKKSMDMAVAMI). In terms of domain architecture, S1 motif spans 625–693 (GQVYKGKIVK…GRVKLSLVAR (69 aa)).

It belongs to the polyribonucleotide nucleotidyltransferase family. In terms of assembly, component of the RNA degradosome, which is a multiprotein complex involved in RNA processing and mRNA degradation. Mg(2+) is required as a cofactor.

It localises to the cytoplasm. It catalyses the reaction RNA(n+1) + phosphate = RNA(n) + a ribonucleoside 5'-diphosphate. Functionally, involved in mRNA degradation. Catalyzes the phosphorolysis of single-stranded polyribonucleotides processively in the 3'- to 5'-direction. In Francisella tularensis subsp. holarctica (strain FTNF002-00 / FTA), this protein is Polyribonucleotide nucleotidyltransferase.